The sequence spans 282 residues: uncharacterized protein (282 aa).

A helical membrane pass occupies residues Y22–F42.

Its subcellular location is the cell membrane. This is an uncharacterized protein from Bacillus anthracis.